The following is a 752-amino-acid chain: MKVGSKELEASKVRVIVDKDPVATSFEKWAQPGHFSRTLAKGPKTTTWIWNLHADAHDFDSQTSSLEDISRKIFSAHFGQLAIIFLWVSQAYFHGARFSNYSAWLLNPTSIKPSAQVVWPVVGQEILNGDVGGGFSGVQITSGVFQMWRASGITNETELYWTAMGGLMMSALMVFAGWFHYHKAAPKLEWFQNVESMMNHHLAGLLGLGCLSWSGHQIHISLPINKLLDAGVAPQEIPLPHELLFNQDLMAQLYPSFKKGLLPFFTLNWGEYSDFLTFKGGLNPITGSLWLSDTAHHHLALAVLFIFAGHMYRTNWGIGHSMKEILEAHKGPLTGEGHKGLYEILTTSWHAQLAINLAMMGSLSIIVAHHMYAMPPYPYIAVDYPTQLSLFTHHMWIGGFCVCGAAAHGAIFMVRDYSPVQSYNNLLDRVLRHRDAIISHLNWVCIFLGTHSFGLYIHNDTMRALGRPQDMFSDKAIQLQPIFAKWVQSLHTLAPGNTAPNSLATASYAFGGDVVAVNGKIAMMPIQLGTADFLVHHIHAFTIHVTVLILLKGVLFARSSRLIPDKANLGFRFPCDGPGRGGTCQVSAWDHIFLGLFWMYNCISVVIFHFSWKMQSDVWGTISEKGKITHITGGNFANSALTINGWLRDFLWSQASQVIQSYGSALSAYGIIFLGAHFIWAFSLMFLFSGRGYWQELIESVVWAHNKLKLAPAIQPRALSITQGRAVGLAHYLLGGIGTTWSFFLARIISVG.

8 helical membrane-spanning segments follow: residues 73 to 96, 159 to 182, 198 to 222, 294 to 312, 349 to 372, 388 to 414, 436 to 458, and 533 to 551; these read IFSA…FHGA, LYWT…FHYH, MNHH…HISL, TAHH…GHMY, WHAQ…HHMY, LSLF…IFMV, AIIS…LYIH, and FLVH…LILL. Residues cysteine 575 and cysteine 584 each contribute to the [4Fe-4S] cluster site. 2 helical membrane-spanning segments follow: residues 591 to 612 and 666 to 688; these read HIFL…HFSW and LSAY…MFLF. Histidine 677 provides a ligand contact to chlorophyll a'. Positions 685 and 693 each coordinate chlorophyll a. Tryptophan 694 provides a ligand contact to phylloquinone. Residues 726–746 traverse the membrane as a helical segment; it reads AVGLAHYLLGGIGTTWSFFLA.

It belongs to the PsaA/PsaB family. The PsaA/B heterodimer binds the P700 chlorophyll special pair and subsequent electron acceptors. PSI consists of a core antenna complex that captures photons, and an electron transfer chain that converts photonic excitation into a charge separation. The eukaryotic PSI reaction center is composed of at least 11 subunits. It depends on P700 is a chlorophyll a/chlorophyll a' dimer, A0 is one or more chlorophyll a, A1 is one or both phylloquinones and FX is a shared 4Fe-4S iron-sulfur center. as a cofactor.

The protein localises to the plastid. The protein resides in the chloroplast thylakoid membrane. The catalysed reaction is reduced [plastocyanin] + hnu + oxidized [2Fe-2S]-[ferredoxin] = oxidized [plastocyanin] + reduced [2Fe-2S]-[ferredoxin]. In terms of biological role, psaA and PsaB bind P700, the primary electron donor of photosystem I (PSI), as well as the electron acceptors A0, A1 and FX. PSI is a plastocyanin/cytochrome c6-ferredoxin oxidoreductase, converting photonic excitation into a charge separation, which transfers an electron from the donor P700 chlorophyll pair to the spectroscopically characterized acceptors A0, A1, FX, FA and FB in turn. Oxidized P700 is reduced on the lumenal side of the thylakoid membrane by plastocyanin or cytochrome c6. The polypeptide is Photosystem I P700 chlorophyll a apoprotein A1 (Emiliania huxleyi (Coccolithophore)).